The following is a 473-amino-acid chain: Sphingosine kinase 1 (473 aa).

Positions 83-233 (QCRGNLLVFI…VALYSVKTDN (151 aa)) constitute a DAGKc domain. Residues 93–95 (NPN) and 125–129 (TTGPN) each bind ATP. A substrate-binding site is contributed by 151 to 154 (SGDG). Catalysis depends on D153, which acts as the Proton donor/acceptor. ATP-binding positions include E158 and 184 to 186 (GSG). D251 is a substrate binding site. ATP is bound by residues R258, R265, and 448–450 (DGE).

Mg(2+) serves as cofactor. Expressed in the majority of cholinergic and GABAergic neurons, body wall muscle, excretory canal cells, intestine, and hypodermis.

Its subcellular location is the presynaptic cell membrane. The protein resides in the cell projection. The protein localises to the axon. It localises to the perikaryon. It is found in the mitochondrion membrane. It catalyses the reaction a sphingoid base + ATP = a sphingoid 1-phosphate + ADP + H(+). The enzyme catalyses 15-methylhexadecasphing-4-enine + ATP = 15-methylhexadecasphing-4-enine 1-phosphate + ADP + H(+). The catalysed reaction is 15-methylhexadecasphinganine + ATP = 15-methylhexadecasphinganine 1-phosphate + ADP + H(+). It participates in lipid metabolism; sphingolipid metabolism. Its function is as follows. Catalyzes the phosphorylation of sphingoid bases to form sphingoid 1-phosphate (SPP), which have both intra- and extracellular functions. C.elegans contain specific sphingoid bases, which are unique or different in structure compared to the sphingoid bases found in other animals. Two examples of these distinctive compounds are: 15-methylhexadecasphinganine and 15-methylhexadecasphing-4-enine. Required for neurotransmitter release from neuromuscular junctions. Acts by recruiting the synaptic vesicle priming protein unc-13 to synapses. The protein is Sphingosine kinase 1 (sphk-1) of Caenorhabditis elegans.